The following is a 488-amino-acid chain: Glutamyl-tRNA(Gln) amidotransferase subunit A (488 aa).

Residues K79 and S159 each act as charge relay system in the active site. S183 acts as the Acyl-ester intermediate in catalysis.

It belongs to the amidase family. GatA subfamily. As to quaternary structure, heterotrimer of A, B and C subunits.

It carries out the reaction L-glutamyl-tRNA(Gln) + L-glutamine + ATP + H2O = L-glutaminyl-tRNA(Gln) + L-glutamate + ADP + phosphate + H(+). In terms of biological role, allows the formation of correctly charged Gln-tRNA(Gln) through the transamidation of misacylated Glu-tRNA(Gln) in organisms which lack glutaminyl-tRNA synthetase. The reaction takes place in the presence of glutamine and ATP through an activated gamma-phospho-Glu-tRNA(Gln). The protein is Glutamyl-tRNA(Gln) amidotransferase subunit A of Wolbachia pipientis subsp. Culex pipiens (strain wPip).